Here is a 109-residue protein sequence, read N- to C-terminus: Iron-sulfur cluster assembly protein CyaY (109 aa).

Belongs to the frataxin family.

In terms of biological role, involved in iron-sulfur (Fe-S) cluster assembly. May act as a regulator of Fe-S biogenesis. The polypeptide is Iron-sulfur cluster assembly protein CyaY (Bordetella bronchiseptica (strain ATCC BAA-588 / NCTC 13252 / RB50) (Alcaligenes bronchisepticus)).